The chain runs to 245 residues: Phycoerythrobilin:ferredoxin oxidoreductase (245 aa).

Belongs to the HY2 family.

It carries out the reaction (3Z)-phycoerythrobilin + oxidized 2[4Fe-4S]-[ferredoxin] = 15,16-dihydrobiliverdin + reduced 2[4Fe-4S]-[ferredoxin] + 2 H(+). In terms of biological role, catalyzes the two-electron reduction of the C2 and C3(1) diene system of 15,16-dihydrobiliverdin. The polypeptide is Phycoerythrobilin:ferredoxin oxidoreductase (pebB) (Gloeobacter violaceus (strain ATCC 29082 / PCC 7421)).